Consider the following 489-residue polypeptide: Rhamnulokinase (489 aa).

13-17 (ASSGR) lines the ATP pocket. Cys68 and Cys222 are joined by a disulfide. Substrate contacts are provided by residues Gly83 and 236 to 238 (HDT). The active-site Proton acceptor is Asp237. Residue Thr259 coordinates ATP. Asn296 serves as a coordination point for substrate. Gln304 is an ATP binding site. The cysteines at positions 353 and 370 are disulfide-linked. Position 402 (Gly402) interacts with ATP. Cys413 and Cys417 are oxidised to a cystine.

This sequence belongs to the rhamnulokinase family. As to quaternary structure, monomer. Mg(2+) serves as cofactor.

It catalyses the reaction L-rhamnulose + ATP = L-rhamnulose 1-phosphate + ADP + H(+). It functions in the pathway carbohydrate degradation; L-rhamnose degradation; glycerone phosphate from L-rhamnose: step 2/3. In terms of biological role, involved in the catabolism of L-rhamnose (6-deoxy-L-mannose). Catalyzes the transfer of the gamma-phosphate group from ATP to the 1-hydroxyl group of L-rhamnulose to yield L-rhamnulose 1-phosphate. This is Rhamnulokinase from Escherichia coli O139:H28 (strain E24377A / ETEC).